A 204-amino-acid chain; its full sequence is Cytochrome c biogenesis ATP-binding export protein CcmA (204 aa).

An ABC transporter domain is found at 3 to 204 (LTVTDLAIAR…PLDDPDGDFL (202 aa)). 35–42 (GPNGAGKT) is an ATP binding site.

It belongs to the ABC transporter superfamily. CcmA exporter (TC 3.A.1.107) family. As to quaternary structure, the complex is composed of two ATP-binding proteins (CcmA) and two transmembrane proteins (CcmB).

It is found in the cell membrane. The enzyme catalyses heme b(in) + ATP + H2O = heme b(out) + ADP + phosphate + H(+). Functionally, part of the ABC transporter complex CcmAB involved in the biogenesis of c-type cytochromes; once thought to export heme, this seems not to be the case, but its exact role is uncertain. Responsible for energy coupling to the transport system. The protein is Cytochrome c biogenesis ATP-binding export protein CcmA of Ruegeria pomeroyi (strain ATCC 700808 / DSM 15171 / DSS-3) (Silicibacter pomeroyi).